The chain runs to 349 residues: Probable protease SohB (349 aa).

Residues 1–8 are Periplasmic-facing; the sequence is MELLSEYG. Residues 9–29 traverse the membrane as a helical segment; that stretch reads LFLAKIVTVVLAIAAIAAIIV. Residues 30–349 are Cytoplasmic-facing; sequence NVAQRNKRQR…WWQRGQKPLM (320 aa). Residue serine 178 is the Nucleophile of the active site. Lysine 230 functions as the Proton donor/acceptor in the catalytic mechanism.

The protein belongs to the peptidase S49 family.

Its subcellular location is the cell inner membrane. In terms of biological role, multicopy suppressor of the HtrA (DegP) null phenotype. It is possibly a protease, not essential for bacterial viability. This Escherichia coli (strain K12) protein is Probable protease SohB (sohB).